The primary structure comprises 345 residues: MDYKSAGVDVEAGRAFVQRIKASVEATHRPEVVGGLGGFGGLMRLPTGLRKPLLVSGTDGVGTKLELAQNHHCHHGVGIDLVAMCVNDVITSGAAPLFFLDYMATGALSPAAMAEVVEGIADGCRQSGCALLGGETAEMPGFYPQGRYDLAGFCVAVVEEDDLIDGRSISPGDQIIGIASSGVHSNGFSLVRKVLEKAGINENSQYGPDNRRLLNDLLAPTTLYASLVQELLSNAIKIHGMAHITGGGLPENLPRCLPEGMTAKIEAEAWPRSPLFQWLQSAGAIPERDLWHTFNMGIGFCLVVPKEAEQTALDVCHLNNHQAWVIGEVLKTPPGEHSALQGLPS.

Belongs to the AIR synthase family.

Its subcellular location is the cytoplasm. It catalyses the reaction 2-formamido-N(1)-(5-O-phospho-beta-D-ribosyl)acetamidine + ATP = 5-amino-1-(5-phospho-beta-D-ribosyl)imidazole + ADP + phosphate + H(+). Its pathway is purine metabolism; IMP biosynthesis via de novo pathway; 5-amino-1-(5-phospho-D-ribosyl)imidazole from N(2)-formyl-N(1)-(5-phospho-D-ribosyl)glycinamide: step 2/2. This chain is Phosphoribosylformylglycinamidine cyclo-ligase, found in Synechococcus sp. (strain CC9902).